Reading from the N-terminus, the 400-residue chain is Na(+)/H(+) antiporter NhaA (400 aa).

Transmembrane regions (helical) follow at residues 26 to 46, 71 to 91, 107 to 127, 137 to 157, 166 to 186, 189 to 209, 225 to 245, 273 to 293, 299 to 319, 340 to 360, and 373 to 393; these read AGGI…NSPL, LIHW…GMEV, IFPA…YWFI, GWAI…ALLS, IFLL…IALF, HGLS…LILL, AILW…GVII, FVIL…GIDV, PLLL…IFGF, IFAV…LASL, and LSRL…YLFL.

Belongs to the NhaA Na(+)/H(+) (TC 2.A.33) antiporter family.

The protein localises to the cell inner membrane. It catalyses the reaction Na(+)(in) + 2 H(+)(out) = Na(+)(out) + 2 H(+)(in). Its function is as follows. Na(+)/H(+) antiporter that extrudes sodium in exchange for external protons. This Haemophilus influenzae (strain ATCC 51907 / DSM 11121 / KW20 / Rd) protein is Na(+)/H(+) antiporter NhaA.